Reading from the N-terminus, the 426-residue chain is tRNA methyltransferase 10 homolog C (426 aa).

The transit peptide at 1–41 (MPVLLKMSVSITFLRPFARVLVPFTLHRKRRVLYSTIMQRY) directs the protein to the mitochondrion. A Phosphoserine modification is found at S86. Residues 138-166 (LYIKEKMKKARQIKKEMKKAEKEEPKKDQ) are a coiled coil. Residues 193 to 385 (MGWKGAQAMQ…KFVPSRKHAG (193 aa)) enclose the SAM-dependent MTase TRM10-type domain.

This sequence belongs to the class IV-like SAM-binding methyltransferase superfamily. TRM10 family. In terms of assembly, component of mitochondrial ribonuclease P, a complex composed of TRMT10C/MRPP1, HSD17B10/MRPP2 and PRORP/MRPP3. Interacts with HSD17B10/MRPP2; forming the MRPP1-MRPP2 subcomplex of the mitochondrial ribonuclease P complex. Interacts with GRSF1.

Its subcellular location is the mitochondrion matrix. It localises to the mitochondrion nucleoid. The enzyme catalyses adenosine(9) in tRNA + S-adenosyl-L-methionine = N(1)-methyladenosine(9) in tRNA + S-adenosyl-L-homocysteine + H(+). It carries out the reaction guanosine(9) in tRNA + S-adenosyl-L-methionine = N(1)-methylguanosine(9) in tRNA + S-adenosyl-L-homocysteine + H(+). The catalysed reaction is an adenosine in mRNA + S-adenosyl-L-methionine = an N(1)-methyladenosine in mRNA + S-adenosyl-L-homocysteine + H(+). Its function is as follows. Mitochondrial tRNA N(1)-methyltransferase involved in mitochondrial tRNA maturation. Component of mitochondrial ribonuclease P, a complex composed of TRMT10C/MRPP1, HSD17B10/MRPP2 and PRORP/MRPP3, which cleaves tRNA molecules in their 5'-ends. Together with HSD17B10/MRPP2, forms a subcomplex of the mitochondrial ribonuclease P, named MRPP1-MRPP2 subcomplex, which displays functions that are independent of the ribonuclease P activity. The MRPP1-MRPP2 subcomplex catalyzes the formation of N(1)-methylguanine and N(1)-methyladenine at position 9 (m1G9 and m1A9, respectively) in tRNAs; TRMT10C/MRPP1 acting as the catalytic N(1)-methyltransferase subunit. The MRPP1-MRPP2 subcomplex also acts as a tRNA maturation platform: following 5'-end cleavage by the mitochondrial ribonuclease P complex, the MRPP1-MRPP2 subcomplex enhances the efficiency of 3'-processing catalyzed by ELAC2, retains the tRNA product after ELAC2 processing and presents the nascent tRNA to the mitochondrial CCA tRNA nucleotidyltransferase TRNT1 enzyme. In addition to tRNA N(1)-methyltransferase activity, TRMT10C/MRPP1 also acts as a mRNA N(1)-methyltransferase by mediating methylation of adenosine residues at the N(1) position of MT-ND5 mRNA. Associates with mitochondrial DNA complexes at the nucleoids to initiate RNA processing and ribosome assembly. This is tRNA methyltransferase 10 homolog C from Bos taurus (Bovine).